The primary structure comprises 477 residues: Ribulose bisphosphate carboxylase large chain (477 aa).

Positions 1-2 (MS) are excised as a propeptide. At P3 the chain carries N-acetylproline. K14 bears the N6,N6,N6-trimethyllysine mark. N123 and T173 together coordinate substrate. Catalysis depends on K175, which acts as the Proton acceptor. A substrate-binding site is contributed by K177. Mg(2+) is bound by residues K201, D203, and E204. N6-carboxylysine is present on K201. H294 (proton acceptor) is an active-site residue. Substrate is bound by residues R295, H327, and S379.

It belongs to the RuBisCO large chain family. Type I subfamily. In terms of assembly, heterohexadecamer of 8 large chains and 8 small chains; disulfide-linked. The disulfide link is formed within the large subunit homodimers. It depends on Mg(2+) as a cofactor. Post-translationally, the disulfide bond which can form in the large chain dimeric partners within the hexadecamer appears to be associated with oxidative stress and protein turnover.

It localises to the plastid. Its subcellular location is the chloroplast. The catalysed reaction is 2 (2R)-3-phosphoglycerate + 2 H(+) = D-ribulose 1,5-bisphosphate + CO2 + H2O. It catalyses the reaction D-ribulose 1,5-bisphosphate + O2 = 2-phosphoglycolate + (2R)-3-phosphoglycerate + 2 H(+). Its function is as follows. RuBisCO catalyzes two reactions: the carboxylation of D-ribulose 1,5-bisphosphate, the primary event in carbon dioxide fixation, as well as the oxidative fragmentation of the pentose substrate in the photorespiration process. Both reactions occur simultaneously and in competition at the same active site. The chain is Ribulose bisphosphate carboxylase large chain from Solanum bulbocastanum (Wild potato).